The chain runs to 533 residues: T-complex protein 1 subunit delta (533 aa).

Over residues 1–15 (MAQSQVGKGSPSNAT) the composition is skewed to polar residues. A disordered region spans residues 1-25 (MAQSQVGKGSPSNATFRDKEKPQEV). Positions 16 to 25 (FRDKEKPQEV) are enriched in basic and acidic residues.

This sequence belongs to the TCP-1 chaperonin family. Heterooligomeric complex of about 850 to 900 kDa that forms two stacked rings, 12 to 16 nm in diameter.

It is found in the cytoplasm. Functionally, molecular chaperone; assists the folding of proteins upon ATP hydrolysis. Known to play a role, in vitro, in the folding of actin and tubulin. In Debaryomyces hansenii (strain ATCC 36239 / CBS 767 / BCRC 21394 / JCM 1990 / NBRC 0083 / IGC 2968) (Yeast), this protein is T-complex protein 1 subunit delta (CCT4).